A 162-amino-acid chain; its full sequence is Glutathione peroxidase-like peroxiredoxin GPX5 (162 aa).

The residue at position 38 (cysteine 38) is an S-selanylcysteine. Asparagine 87 is an active-site residue.

The protein belongs to the glutathione peroxidase family. In terms of processing, cys-87 is S-selanylated when selenium levels are high. S-selanylation may increase or be important for glutathione peroxidase activity.

The protein resides in the cytoplasm. It catalyses the reaction 2 glutathione + H2O2 = glutathione disulfide + 2 H2O. The catalysed reaction is a hydroperoxide + [thioredoxin]-dithiol = an alcohol + [thioredoxin]-disulfide + H2O. Its function is as follows. Has thioredoxin peroxidase activity. May also have glutathione peroxidase activity, although this activity is controversial. Protects cells against reactive oxygen species, which may include photooxidative stress, hydrogen peroxide and organic hydroperoxides. The chain is Glutathione peroxidase-like peroxiredoxin GPX5 from Chlamydomonas reinhardtii (Chlamydomonas smithii).